A 256-amino-acid polypeptide reads, in one-letter code: 5'-nucleotidase SurE (256 aa).

A divalent metal cation contacts are provided by aspartate 8, aspartate 9, serine 40, and asparagine 92.

Belongs to the SurE nucleotidase family. A divalent metal cation is required as a cofactor.

Its subcellular location is the cytoplasm. The enzyme catalyses a ribonucleoside 5'-phosphate + H2O = a ribonucleoside + phosphate. Its function is as follows. Nucleotidase that shows phosphatase activity on nucleoside 5'-monophosphates. The protein is 5'-nucleotidase SurE of Sinorhizobium medicae (strain WSM419) (Ensifer medicae).